The primary structure comprises 109 residues: Period circadian protein (109 aa).

Positions 29-100 are disordered; the sequence is ITAPVDVDPH…TGTSSGSVQL (72 aa). The segment covering 69–97 has biased composition (low complexity); that stretch reads SGNFNSGSNLHIGSITNTSNTGTGTSSGS.

Forms a heterodimer with timeless (TIM); the complex then translocates into the nucleus. In terms of processing, phosphorylated with a circadian rhythmicity, probably by the double-time protein (dbt). Phosphorylation could be implicated in the stability of per monomer and in the formation of heterodimer per-tim.

The protein resides in the nucleus. It is found in the cytoplasm. Its subcellular location is the perinuclear region. In terms of biological role, essential for biological clock functions. Determines the period length of circadian and ultradian rhythms; an increase in PER dosage leads to shortened circadian rhythms and a decrease leads to lengthened circadian rhythms. Essential for the circadian rhythmicity of locomotor activity, eclosion behavior, and for the rhythmic component of the male courtship song that originates in the thoracic nervous system. The biological cycle depends on the rhythmic formation and nuclear localization of the TIM-PER complex. Light induces the degradation of TIM, which promotes elimination of PER. Nuclear activity of the heterodimer coordinatively regulates PER and TIM transcription through a negative feedback loop. Behaves as a negative element in circadian transcriptional loop. Does not appear to bind DNA, suggesting indirect transcriptional inhibition. This chain is Period circadian protein (per), found in Loxocera albiseta (Rust fly).